We begin with the raw amino-acid sequence, 215 residues long: Cytidylate kinase (215 aa).

10–18 (GPAASGKGT) contacts ATP.

This sequence belongs to the cytidylate kinase family. Type 1 subfamily.

It is found in the cytoplasm. The catalysed reaction is CMP + ATP = CDP + ADP. It catalyses the reaction dCMP + ATP = dCDP + ADP. The protein is Cytidylate kinase of Bartonella tribocorum (strain CIP 105476 / IBS 506).